Here is a 293-residue protein sequence, read N- to C-terminus: tRNA pseudouridine synthase B (293 aa).

Asp38 acts as the Nucleophile in catalysis.

This sequence belongs to the pseudouridine synthase TruB family. Type 1 subfamily.

It catalyses the reaction uridine(55) in tRNA = pseudouridine(55) in tRNA. Functionally, responsible for synthesis of pseudouridine from uracil-55 in the psi GC loop of transfer RNAs. This Microcystis aeruginosa (strain NIES-843 / IAM M-2473) protein is tRNA pseudouridine synthase B.